The following is a 129-amino-acid chain: MQTMEGRQYNYQDSINASSSMVVPHSPWHSPVPYLFGGLAAMLALICVALLILACSYWRLSGSAERDLEAGDDAKPDNDTNKTKHTEMPEKFLVIMAGDVRPTYLATPATRSEQSCTCGDHNEEEGRRG.

Topologically, residues 1-34 (MQTMEGRQYNYQDSINASSSMVVPHSPWHSPVPY) are extracellular. A helical transmembrane segment spans residues 35–55 (LFGGLAAMLALICVALLILAC). The Cytoplasmic segment spans residues 56–129 (SYWRLSGSAE…DHNEEEGRRG (74 aa)). The interval 66–89 (RDLEAGDDAKPDNDTNKTKHTEMP) is disordered. The short motif at 94-98 (VIMAG) is the VIMAG element. A disordered region spans residues 106–129 (ATPATRSEQSCTCGDHNEEEGRRG). The segment covering 120–129 (DHNEEEGRRG) has biased composition (basic and acidic residues).

The protein belongs to the GLUTAMINE DUMPER 1 (TC 9.B.60) family. Expressed in the vascular tissues.

The protein localises to the membrane. Its function is as follows. Probable subunit of an amino acid transporter involved in the regulation of the amino acid metabolism. Stimulates amino acid export by activating nonselective amino acid facilitators. The sequence is that of Protein GLUTAMINE DUMPER 2 (GDU2) from Arabidopsis thaliana (Mouse-ear cress).